Reading from the N-terminus, the 401-residue chain is MDTGVKKVVLAYSGGLDTSVIVQWLIETYGCEVIAFAADVGQKEELEGLREKAIKTGASKIYIEDLREEFARDFVFPALRANAIYEGTYLLGTSLARPLIAKRQVEIARAEGADAVCHGATGKGNDQVRFELTYMALEPNIRIISAWKDPNWHFKSREDMFDYAEKHNIPLPLTREKPYSSDRNLLHISHEGAILEDPWAEPPEDIFTISLSPEAAPDKPTYVEIDFEQGNPVALDGARLSPAALMEKMNDIAGANGIGRVDMVENRFVGMKSRGVYETPGGTVLWAAHRALESLTMDREVMLMRDSLIPKYAQLAYNGFWYAPEMEALQALIDETQKKATGTVRMKLYKGNSIVVGRKSPYSLYSEDFATFEKDQVYNQMDATGFIRLNALRLRIAAMKK.

ATP-binding positions include 11–19 (AYSGGLDTS) and A38. Residues Y89 and S94 each coordinate L-citrulline. Position 119 (G119) interacts with ATP. Positions 121, 125, and 126 each coordinate L-aspartate. Residue N125 participates in L-citrulline binding. L-citrulline contacts are provided by R129, S180, S189, E265, and Y277.

It belongs to the argininosuccinate synthase family. Type 1 subfamily. As to quaternary structure, homotetramer.

The protein localises to the cytoplasm. It catalyses the reaction L-citrulline + L-aspartate + ATP = 2-(N(omega)-L-arginino)succinate + AMP + diphosphate + H(+). The protein operates within amino-acid biosynthesis; L-arginine biosynthesis; L-arginine from L-ornithine and carbamoyl phosphate: step 2/3. The protein is Argininosuccinate synthase of Syntrophus aciditrophicus (strain SB).